A 189-amino-acid polypeptide reads, in one-letter code: 2-oxoglutarate synthase subunit KorC (189 aa).

In terms of assembly, heterotetramer of the KorA, KorB, KorC and KorD subunits.

It carries out the reaction 2 oxidized [2Fe-2S]-[ferredoxin] + 2-oxoglutarate + CoA = succinyl-CoA + 2 reduced [2Fe-2S]-[ferredoxin] + CO2 + H(+). The sequence is that of 2-oxoglutarate synthase subunit KorC (korC) from Methanothermobacter thermautotrophicus (strain ATCC 29096 / DSM 1053 / JCM 10044 / NBRC 100330 / Delta H) (Methanobacterium thermoautotrophicum).